Reading from the N-terminus, the 201-residue chain is Large ribosomal subunit protein bL25 (201 aa).

Belongs to the bacterial ribosomal protein bL25 family. CTC subfamily. Part of the 50S ribosomal subunit; part of the 5S rRNA/L5/L18/L25 subcomplex. Contacts the 5S rRNA. Binds to the 5S rRNA independently of L5 and L18.

This is one of the proteins that binds to the 5S RNA in the ribosome where it forms part of the central protuberance. This is Large ribosomal subunit protein bL25 from Burkholderia lata (strain ATCC 17760 / DSM 23089 / LMG 22485 / NCIMB 9086 / R18194 / 383).